The sequence spans 1045 residues: Probable beta-glucosidase E (1045 aa).

A disordered region spans residues 1–74; that stretch reads MAPPDSTHGG…SGSYQLRPVD (74 aa). The Cytoplasmic segment spans residues 1–163; sequence MAPPDSTHGG…PVKYARIWWR (163 aa). A compositionally biased stretch (basic and acidic residues) spans 11–20; sequence SFRDHLKTND. The chain crosses the membrane as a helical; Signal-anchor for type II membrane protein span at residues 164–184; the sequence is TLLAVIVTLAVVVWGFLSFAV. The Extracellular segment spans residues 185-1045; the sequence is SHREEPKVWP…SRDLPLMGEY (861 aa). N-linked (GlcNAc...) asparagine glycans are attached at residues N226, N234, and N402. The active site involves D430. N473, N512, N577, N893, N902, and N988 each carry an N-linked (GlcNAc...) asparagine glycan.

It belongs to the glycosyl hydrolase 3 family.

It is found in the cell membrane. It carries out the reaction Hydrolysis of terminal, non-reducing beta-D-glucosyl residues with release of beta-D-glucose.. It participates in glycan metabolism; cellulose degradation. Its function is as follows. Beta-glucosidases are one of a number of cellulolytic enzymes involved in the degradation of cellulosic biomass. Catalyzes the last step releasing glucose from the inhibitory cellobiose. The sequence is that of Probable beta-glucosidase E (bglE) from Neosartorya fischeri (strain ATCC 1020 / DSM 3700 / CBS 544.65 / FGSC A1164 / JCM 1740 / NRRL 181 / WB 181) (Aspergillus fischerianus).